Reading from the N-terminus, the 224-residue chain is MSIASWPESERPREKLLSQGAATLNDSELLAIFLRTGIKGVNAVELARRLLQEFGSLSALLAAPLPAFKAKPGLGEAKYAQLMACTELARRALSEQMRLGDALSSPQQVRDYLRLSIGRREVETFVVIFLSAQNRLIEVEEVFKGTLTETRVYPREVLRRALRHNAAALIIAHNHPSGVSEPSSADRVLTDTLKRALELVDIRLLDHFVVTGGHAESFAERGWL.

One can recognise an MPN domain in the interval 102-224 (ALSSPQQVRD…AESFAERGWL (123 aa)). Zn(2+) is bound by residues histidine 173, histidine 175, and aspartate 186. The JAMM motif signature appears at 173–186 (HNHPSGVSEPSSAD).

Belongs to the UPF0758 family.

The protein is UPF0758 protein CV_3079 of Chromobacterium violaceum (strain ATCC 12472 / DSM 30191 / JCM 1249 / CCUG 213 / NBRC 12614 / NCIMB 9131 / NCTC 9757 / MK).